Consider the following 216-residue polypeptide: Ribonuclease HII (216 aa).

Positions 28-216 (ACIAGIDEAG…GVKEYVRSEE (189 aa)) constitute an RNase H type-2 domain. Positions 34, 35, and 126 each coordinate a divalent metal cation.

Belongs to the RNase HII family. It depends on Mn(2+) as a cofactor. Requires Mg(2+) as cofactor.

It localises to the cytoplasm. The catalysed reaction is Endonucleolytic cleavage to 5'-phosphomonoester.. Endonuclease that specifically degrades the RNA of RNA-DNA hybrids. This is Ribonuclease HII from Geotalea uraniireducens (strain Rf4) (Geobacter uraniireducens).